The sequence spans 489 residues: Betaine aldehyde dehydrogenase (489 aa).

Thr26 and Asp93 together coordinate K(+). Position 150 to 152 (150 to 152) interacts with NAD(+); sequence GAW. The active-site Charge relay system is the Lys162. Residue 176-179 participates in NAD(+) binding; it reads KPSE. Val180 is a K(+) binding site. 229–232 serves as a coordination point for NAD(+); sequence GVET. Leu245 lines the K(+) pocket. Glu251 serves as the catalytic Proton acceptor. Residues Gly253, Cys285, and Glu386 each contribute to the NAD(+) site. Residue Cys285 is the Nucleophile of the active site. A Cysteine sulfenic acid (-SOH) modification is found at Cys285. Positions 456 and 459 each coordinate K(+). Glu463 (charge relay system) is an active-site residue.

Belongs to the aldehyde dehydrogenase family. Dimer of dimers. The cofactor is K(+).

It catalyses the reaction betaine aldehyde + NAD(+) + H2O = glycine betaine + NADH + 2 H(+). Its pathway is amine and polyamine biosynthesis; betaine biosynthesis via choline pathway; betaine from betaine aldehyde: step 1/1. Its function is as follows. Involved in the biosynthesis of the osmoprotectant glycine betaine. Catalyzes the irreversible oxidation of betaine aldehyde to the corresponding acid. The protein is Betaine aldehyde dehydrogenase of Burkholderia ambifaria (strain ATCC BAA-244 / DSM 16087 / CCUG 44356 / LMG 19182 / AMMD) (Burkholderia cepacia (strain AMMD)).